The following is a 213-amino-acid chain: tRNA (guanine-N(7)-)-methyltransferase (213 aa).

Positions 44, 69, 96, and 118 each coordinate S-adenosyl-L-methionine. Aspartate 118 is an active-site residue. Residue lysine 122 coordinates substrate. The interval 124–129 (RHEKRR) is interaction with RNA. Residues aspartate 154 and 191-194 (TEYE) contribute to the substrate site.

This sequence belongs to the class I-like SAM-binding methyltransferase superfamily. TrmB family.

It catalyses the reaction guanosine(46) in tRNA + S-adenosyl-L-methionine = N(7)-methylguanosine(46) in tRNA + S-adenosyl-L-homocysteine. It functions in the pathway tRNA modification; N(7)-methylguanine-tRNA biosynthesis. Functionally, catalyzes the formation of N(7)-methylguanine at position 46 (m7G46) in tRNA. This is tRNA (guanine-N(7)-)-methyltransferase from Bacillus licheniformis (strain ATCC 14580 / DSM 13 / JCM 2505 / CCUG 7422 / NBRC 12200 / NCIMB 9375 / NCTC 10341 / NRRL NRS-1264 / Gibson 46).